A 433-amino-acid chain; its full sequence is Apolipoprotein B (433 aa).

Asparagine 158 is a glycosylation site (N-linked (GlcNAc...) asparagine).

Its subcellular location is the cytoplasm. The protein localises to the secreted. It is found in the lipid droplet. Its function is as follows. Apolipoprotein B is a major protein constituent of chylomicrons, VLDL and LDL. It functions as a recognition signal for the cellular binding and internalization of LDL particles by the apoB/E receptor. The protein is Apolipoprotein B (APOB) of Gallus gallus (Chicken).